A 484-amino-acid chain; its full sequence is Mitochondrial metal transporter 2 (484 aa).

The transit peptide at Met1–Asn56 directs the protein to the mitochondrion. Positions Ser73 to Gln82 are enriched in polar residues. The disordered stretch occupies residues Ser73–Asn114. Residues Asn83–Lys92 are compositionally biased toward basic and acidic residues. 5 helical membrane passes run Ile132–Ile152, Ala158–Phe178, Ile209–Val229, Ala256–Phe276, and Tyr316–Ile336. The disordered stretch occupies residues Asp453–His484.

The protein belongs to the cation diffusion facilitator (CDF) transporter (TC 2.A.4) family. SLC30A subfamily.

It is found in the mitochondrion membrane. In terms of biological role, mitochondrial metal transporter involved in mitochondrial iron accumulation. In Saccharomyces cerevisiae (strain ATCC 204508 / S288c) (Baker's yeast), this protein is Mitochondrial metal transporter 2 (MMT2).